A 195-amino-acid chain; its full sequence is ATP-dependent Clp protease proteolytic subunit (195 aa).

Ser99 serves as the catalytic Nucleophile. His124 is an active-site residue.

This sequence belongs to the peptidase S14 family. In terms of assembly, fourteen ClpP subunits assemble into 2 heptameric rings which stack back to back to give a disk-like structure with a central cavity, resembling the structure of eukaryotic proteasomes.

The protein localises to the cytoplasm. It catalyses the reaction Hydrolysis of proteins to small peptides in the presence of ATP and magnesium. alpha-casein is the usual test substrate. In the absence of ATP, only oligopeptides shorter than five residues are hydrolyzed (such as succinyl-Leu-Tyr-|-NHMec, and Leu-Tyr-Leu-|-Tyr-Trp, in which cleavage of the -Tyr-|-Leu- and -Tyr-|-Trp bonds also occurs).. Cleaves peptides in various proteins in a process that requires ATP hydrolysis. Has a chymotrypsin-like activity. Plays a major role in the degradation of misfolded proteins. This is ATP-dependent Clp protease proteolytic subunit from Caldicellulosiruptor saccharolyticus (strain ATCC 43494 / DSM 8903 / Tp8T 6331).